We begin with the raw amino-acid sequence, 449 residues long: Glucose-6-phosphate isomerase (449 aa).

E291 (proton donor) is an active-site residue. Catalysis depends on residues H312 and K426.

This sequence belongs to the GPI family.

It is found in the cytoplasm. It catalyses the reaction alpha-D-glucose 6-phosphate = beta-D-fructose 6-phosphate. It functions in the pathway carbohydrate biosynthesis; gluconeogenesis. It participates in carbohydrate degradation; glycolysis; D-glyceraldehyde 3-phosphate and glycerone phosphate from D-glucose: step 2/4. Functionally, catalyzes the reversible isomerization of glucose-6-phosphate to fructose-6-phosphate. In Streptococcus gordonii (strain Challis / ATCC 35105 / BCRC 15272 / CH1 / DL1 / V288), this protein is Glucose-6-phosphate isomerase.